The chain runs to 116 residues: Ly-6/neurotoxin-like protein 1 (116 aa).

Positions 1 to 20 are cleaved as a signal peptide; that stretch reads MTPLLTLFLVALIGLPLAQA. The region spanning 21–105 is the UPAR/Ly6 domain; the sequence is LDCHVCAYNG…FAAPATLALA (85 aa). Disulfide bonds link C23-C46, C26-C33, C39-C64, C68-C85, and C86-C91. The GPI-anchor amidated asparagine moiety is linked to residue N92. A propeptide spans 93–116 (removed in mature form); the sequence is GAGFAAPATLALAPILLATLWGLL.

Interacts with nAChRs containing alpha-4:beta-2 (CHRNA4:CHRNB2) and alpha-7 (CHRNA7) subunits. Interacts with CHRNA4 probably in the endoplasmic reticulum prior to nAChR pentameric assembly. Interacts with KCNA2/Potassium voltage-gated channel subfamily A member 2.

It is found in the cell membrane. The protein resides in the cell projection. The protein localises to the dendrite. Its subcellular location is the endoplasmic reticulum. Functionally, acts in different tissues through interaction to nicotinic acetylcholine receptors (nAChRs). The proposed role as modulator of nAChR activity seems to be dependent on the nAChR subtype and stoichiometry, and to involve an effect on nAChR trafficking and its cell surface expression, and on single channel properties of the nAChR inserted in the plasma membrane. Modulates functional properties of nicotinic acetylcholine receptors (nAChRs) to prevent excessive excitation, and hence neurodegeneration. Enhances desensitization by increasing both the rate and extent of desensitization of alpha-4:beta-2-containing nAChRs and slowing recovery from desensitization. Promotes large amplitude ACh-evoked currents through alpha-4:beta-2 nAChRs. Is involved in regulation of the nAChR pentameric assembly in the endoplasmic reticulum. Shifts stoichiometry from high sensitivity alpha-4(2):beta-2(3) to low sensitivity alpha-4(3):beta-2(2) nAChR. In vitro modulates alpha-3:beta-4-containing nAChRs. Reduces cell surface expression of (alpha-3:beta-4)(2):beta-4 and (alpha-3:beta-4)(2):alpha-5 nAChRs suggesting an interaction with nAChR alpha-3(-):(+)beta-4 subunit interfaces and an allosteric mode. Corresponding single channel effects characterized by decreased unitary conductance, altered burst proportions and enhanced desensitization/inactivation seem to depend on nAChR alpha:alpha subunit interfaces and are greater in (alpha-3:beta-2)(2):alpha-3 when compared to (alpha-3:beta-2)(2):alpha-5 nAChRs. Prevents plasticity in the primary visual cortex late in life. This Saimiri boliviensis boliviensis (Bolivian squirrel monkey) protein is Ly-6/neurotoxin-like protein 1.